Consider the following 319-residue polypeptide: Olfactory receptor 8U3 (319 aa).

Topologically, residues 1-25 (MAEVNISYVSEFILKGITDRPELQA) are extracellular. A glycan (N-linked (GlcNAc...) asparagine) is linked at N5. The chain crosses the membrane as a helical span at residues 26 to 46 (PCFVMFLTIYLVTVLGNLGLI). Residues 47–54 (VIIRVDSR) lie on the Cytoplasmic side of the membrane. Residues 55-75 (LHTPMYFFLSHLAFVDLCYSS) form a helical membrane-spanning segment. Topologically, residues 76-99 (AITPKMMVNFVVERNTIPFHACAT) are extracellular. C97 and C189 are oxidised to a cystine. A helical transmembrane segment spans residues 100-120 (QLGCFLTFMITECFLLASMAY). The Cytoplasmic portion of the chain corresponds to 121–133 (DRYVAICSPLHYS). Residues 134–154 (TLMSKRVCIQLVAVPYVYSFL) form a helical membrane-spanning segment. Over 155–196 (VALFHTIITFRLTYCGPNVINHFYCDDLPLLALSCSDTHMKE) the chain is Extracellular. Residues 197–217 (ILIFAFAGFDMICSSSIVLTS) form a helical membrane-spanning segment. Topologically, residues 218–237 (YLFIIAAILRIRSTQGRRKA) are cytoplasmic. The helical transmembrane segment at 238–258 (ISTCGSHMVAVTIFYGTLIFM) threads the bilayer. Over 259–271 (YLQPKSNHSLDTD) the chain is Extracellular. N-linked (GlcNAc...) asparagine glycosylation occurs at N265. A helical membrane pass occupies residues 272–292 (KMASVFYTVVIPMLNPLIYSL). Topologically, residues 293–319 (RNKEVKDASKKALDKGYETLKILRLSK) are cytoplasmic.

Belongs to the G-protein coupled receptor 1 family.

It localises to the cell membrane. Potential odorant receptor. This is Olfactory receptor 8U3 from Mus musculus (Mouse).